The chain runs to 831 residues: MIPLDPAQRAAELRRRLQEANYHYHVLDQPRIPDADYDRMLRELDALEATYPDLATPDSPTQRVGHTIATAFSEVRHTVPMLSLNNAFSDPEVLEFVRRITARLGETAPSFSAEPKLDGLAISLRYQNGIFIQGATRGDGVTGEDVTANLRTLPTIPQRLQSDTWPTVLEVRGEVYMPRPDFEAYNTQARLRGWKVLANPRNGAAGSLRQLDPHITAQRPLSFYAYGIGEVADDVSFHSHSEILASLRAWGFPVSPLVELVYGSEGLLNYYRRMETIRDTLPFDIDGIVYKLDDLSGQHEMGFVARAPRWAIAHKFPAQEQTTTVEAIEIQIGRTGAATPVARLTPVQVAGVTVTSATLHNADQIARLDVRIGDTVIVRRAGDVIPEVVAVITDSRPPGVTAWSMPMACPVCGSEIVRETGAAVWRCSGELACPAQRKEAIRHFVSRRAMDVEGLGVKCIELLVDAAVVHGVADLYHLSLDQLLRLRLVTNAQTPTMLLREARDHVTGMRYQQLEEILRTVGVDLSGEGDVPEHWQIDVLRAQWPDFDWNHKKIATKWAQNLIAAIDRSRQTTLERFLFALGMTHVGETTAKALAHSFGDLAIIRQLPWPLFKCVPDIGGEVARAIGHFMDQPANQQAIDDLVERGVRITDAHPPTSTLRDQLTLASLLEHLEIPKITPMRAVQLATLAPTLPLLAEADLDALLQAGVPQPAAQSLTEWFQSPDNISLARRLQHCCDVLLAQLPSPDRAHTAPLNGQSVVLTGKLASLTREAAATRLEMLGAKIVGSVSKKTSFLVAGEDPGSKLDKAHALHVDIWDEARLLDFLEQYSAQ.

NAD(+) is bound by residues 34-38 (DADYD), 83-84 (SL), and glutamate 114. The active-site N6-AMP-lysine intermediate is the lysine 116. Residues arginine 137, glutamate 174, lysine 291, and lysine 315 each contribute to the NAD(+) site. Positions 409, 412, 427, and 433 each coordinate Zn(2+). The BRCT domain maps to 749-831 (AHTAPLNGQS…LDFLEQYSAQ (83 aa)).

Belongs to the NAD-dependent DNA ligase family. LigA subfamily. Requires Mg(2+) as cofactor. The cofactor is Mn(2+).

The enzyme catalyses NAD(+) + (deoxyribonucleotide)n-3'-hydroxyl + 5'-phospho-(deoxyribonucleotide)m = (deoxyribonucleotide)n+m + AMP + beta-nicotinamide D-nucleotide.. DNA ligase that catalyzes the formation of phosphodiester linkages between 5'-phosphoryl and 3'-hydroxyl groups in double-stranded DNA using NAD as a coenzyme and as the energy source for the reaction. It is essential for DNA replication and repair of damaged DNA. This Xylella fastidiosa (strain M12) protein is DNA ligase.